The following is a 332-amino-acid chain: DNA-directed RNA polymerase subunit alpha (332 aa).

An alpha N-terminal domain (alpha-NTD) region spans residues 1 to 230 (MKKITTSAYM…KQMSIFNNVL (230 aa)). Residues 246 to 332 (EHSKLLESVE…LRKKISELKS (87 aa)) are alpha C-terminal domain (alpha-CTD).

This sequence belongs to the RNA polymerase alpha chain family. Homodimer. The RNAP catalytic core consists of 2 alpha, 1 beta, 1 beta' and 1 omega subunit. When a sigma factor is associated with the core the holoenzyme is formed, which can initiate transcription.

It catalyses the reaction RNA(n) + a ribonucleoside 5'-triphosphate = RNA(n+1) + diphosphate. DNA-dependent RNA polymerase catalyzes the transcription of DNA into RNA using the four ribonucleoside triphosphates as substrates. This is DNA-directed RNA polymerase subunit alpha from Campylobacter fetus subsp. fetus (strain 82-40).